A 332-amino-acid polypeptide reads, in one-letter code: MQKNILVLGAGAWGTALALQLAYRGHNVRINSWKAEHNEQMLKDNNNHKYLPSIEKFPSRLKAIQDWQANISEFDNILVATPSSGFKNTILELKEYILPQQNIISATKGFCHDSYALLSEIAEDILPTTKFALLTGPSFAKELANQLPTAVVVASKDIAYARYVQELFSNENFRCYTTTDIIGAQVGGAVKNVLAITAGIAAGMEFGVNAHAALITRGLAEIKKLGLKLGANSETFIGLSCLGDLLLTCSDNQSRNRRFGLYLGQGMTIQQALKEVNNVVEGYFTAKAVYNLAKKHNVEMPLVFATYRILYEAADPRDIVKELMTRQLKNEN.

3 residues coordinate NADPH: W13, K34, and K108. Sn-glycerol 3-phosphate-binding residues include K108, G136, and S138. Residue A140 coordinates NADPH. Positions 191, 244, 254, 255, and 256 each coordinate sn-glycerol 3-phosphate. K191 (proton acceptor) is an active-site residue. R255 provides a ligand contact to NADPH. NADPH-binding residues include V279 and E281.

This sequence belongs to the NAD-dependent glycerol-3-phosphate dehydrogenase family.

Its subcellular location is the cytoplasm. It catalyses the reaction sn-glycerol 3-phosphate + NAD(+) = dihydroxyacetone phosphate + NADH + H(+). The enzyme catalyses sn-glycerol 3-phosphate + NADP(+) = dihydroxyacetone phosphate + NADPH + H(+). It functions in the pathway membrane lipid metabolism; glycerophospholipid metabolism. Its function is as follows. Catalyzes the reduction of the glycolytic intermediate dihydroxyacetone phosphate (DHAP) to sn-glycerol 3-phosphate (G3P), the key precursor for phospholipid synthesis. The protein is Glycerol-3-phosphate dehydrogenase [NAD(P)+] of Francisella tularensis subsp. novicida (strain U112).